Consider the following 1043-residue polypeptide: MSFIRKKSMEFLKSFEVPAKNPSEEAQRRWRDAVGTLVKNRRRRFRMVPDLDKRSQAETQRRKIQEKLRVALFVQKAALQFIDAVRKTEHPLPELARQCGFSVSAEELASIVRGHDTKSLRFHNGVDGIARKVAVSLADGVKSDDAGLRAEVYGANQYTEKPPRTFWMFLWDASQDMTLLLLAFCAAVSVAIGLATEGWPSGMYDGVGIMLTILLVVMITAASDYKQSLQFRDLDKEKKKIDVQVTRDGYRQKVSIYDIVVGDIVHLSIGDQVPADGLFIDGYSFVVDESNLSGESEPVHVSTANRFLLGGTKVQDGSARMLVTAVGMRTEWGNLMETLSQGGEDETPLQVKLNGVATIIGKIGLAFAVLTFTVLMARFLLGKAGAPGGLLRWRMVDALAVLNFFAVAVTIIVVAVPEGLPLAVTLSLAFAMKKLMQERALVRHLSACETMGSASCICTDKTGTLTTNHMVVEKIWASGAAQTMSNAKGFDQLTSSMSETFAKVLLEGVFHCSGSEVVRGKDGRHTIMGTPTETAILEFGLAVEKRARIEHTGAGKLKVEPFNSVKKTMAVVIASPSAGGRPRAFLKGASEVVLSRCSLVLDGTGNVEKLTDAKAKRVASAIDAFACEALRTLCLAYQDVDGGGGDIPGEGYTLIAVFGIKDPLRPGVREAVATCHAAGINVRMVTGDNINTAKAIARECGILTDDGIAIEGPEFRNKDPDQMREIIPKIQVMARSLPLDKHTLVTNLRGMFNEVVAVTGDGTNDAPALHEADIGLAMGIAGTEVAKENADVIIMDDNFSTIINVAKWGRSVYINIQKFVQFQLTVNVVALMVNFISASFTGSAPLTIVQLLWVNLIMDTLGALALATEPPNDAMMKRPPVGRGDNFITKVMWRNIVGQSIYQLVVLGVLLLRGKSLLQINGPQADSLLNTFVFNTFVFCQVFNEVNSREMEKINVFSGIFSSWIFSAVVGVTAGFQVIMVELLGTFANTVHLSGKLWLTSVLIGSVGLVIGAILKCIPVESGSDASDRHDGYRPIPTGPSAV.

The Cytoplasmic portion of the chain corresponds to 1 to 178 (MSFIRKKSME…FLWDASQDMT (178 aa)). A run of 2 helical transmembrane segments spans residues 179-199 (LLLLAFCAAVSVAIGLATEGW) and 202-222 (GMYDGVGIMLTILLVVMITAA). Residues 223–258 (SDYKQSLQFRDLDKEKKKIDVQVTRDGYRQKVSIYD) are Cytoplasmic-facing. Helical transmembrane passes span 259 to 279 (IVVGDIVHLSIGDQVPADGLF) and 356 to 376 (VATIIGKIGLAFAVLTFTVLM). Topologically, residues 377–395 (ARFLLGKAGAPGGLLRWRM) are cytoplasmic. The helical transmembrane segment at 396–416 (VDALAVLNFFAVAVTIIVVAV) threads the bilayer. The active-site 4-aspartylphosphate intermediate is D460. Mg(2+) is bound by residues D761 and D765. Residues 824–844 (LTVNVVALMVNFISASFTGSA) traverse the membrane as a helical segment. P845 is a topological domain (cytoplasmic). The next 2 helical transmembrane spans lie at 846-866 (LTIVQLLWVNLIMDTLGALAL) and 891-911 (VMWRNIVGQSIYQLVVLGVLL). Over 912-955 (LRGKSLLQINGPQADSLLNTFVFNTFVFCQVFNEVNSREMEKIN) the chain is Cytoplasmic. 2 helical membrane-spanning segments follow: residues 956-976 (VFSGIFSSWIFSAVVGVTAGF) and 998-1018 (WLTSVLIGSVGLVIGAILKCI). Residues 1019–1043 (PVESGSDASDRHDGYRPIPTGPSAV) lie on the Cytoplasmic side of the membrane. The tract at residues 1023–1043 (GSDASDRHDGYRPIPTGPSAV) is disordered.

The protein belongs to the cation transport ATPase (P-type) (TC 3.A.3) family. Type IIB subfamily.

It localises to the membrane. The catalysed reaction is Ca(2+)(in) + ATP + H2O = Ca(2+)(out) + ADP + phosphate + H(+). With respect to regulation, activated by calmodulin. Functionally, this magnesium-dependent enzyme catalyzes the hydrolysis of ATP coupled with the translocation of calcium from the cytosol out of the cell, into the endoplasmic reticulum, or into organelles. The polypeptide is Calcium-transporting ATPase 1, plasma membrane-type (Oryza sativa subsp. japonica (Rice)).